The following is a 310-amino-acid chain: 26S proteasome non-ATPase regulatory subunit 7 homolog B (310 aa).

M1 is subject to N-acetylmethionine. The MPN domain maps to 17–154; sequence VIVHPLVLLS…YYAVEEVKEN (138 aa).

This sequence belongs to the peptidase M67A family. As to quaternary structure, component of the 19S regulatory particle (RP/PA700) lid subcomplex of the 26S proteasome. The 26S proteasome is composed of a core protease (CP), known as the 20S proteasome, capped at one or both ends by the 19S regulatory particle (RP/PA700). The RP/PA700 complex is composed of at least 17 different subunits in two subcomplexes, the base and the lid, which form the portions proximal and distal to the 20S proteolytic core, respectively.

Its function is as follows. Acts as a regulatory subunit of the 26S proteasome which is involved in the ATP-dependent degradation of ubiquitinated proteins. This is 26S proteasome non-ATPase regulatory subunit 7 homolog B (RPN8B) from Arabidopsis thaliana (Mouse-ear cress).